The following is a 545-amino-acid chain: Chaperonin GroEL (545 aa).

Residues 30–33 (TMGP), Lys51, 87–91 (DGTTT), Gly415, and Asp494 contribute to the ATP site.

It belongs to the chaperonin (HSP60) family. As to quaternary structure, forms a cylinder of 14 subunits composed of two heptameric rings stacked back-to-back. Interacts with the co-chaperonin GroES.

It localises to the cytoplasm. It catalyses the reaction ATP + H2O + a folded polypeptide = ADP + phosphate + an unfolded polypeptide.. In terms of biological role, together with its co-chaperonin GroES, plays an essential role in assisting protein folding. The GroEL-GroES system forms a nano-cage that allows encapsulation of the non-native substrate proteins and provides a physical environment optimized to promote and accelerate protein folding. This is Chaperonin GroEL from Helicobacter hepaticus (strain ATCC 51449 / 3B1).